Here is a 185-residue protein sequence, read N- to C-terminus: Large ribosomal subunit protein uL5 (185 aa).

The protein belongs to the universal ribosomal protein uL5 family. In terms of assembly, part of the 50S ribosomal subunit; part of the 5S rRNA/L5/L18/L25 subcomplex. Contacts the 5S rRNA and the P site tRNA. Forms a bridge to the 30S subunit in the 70S ribosome.

Its function is as follows. This is one of the proteins that bind and probably mediate the attachment of the 5S RNA into the large ribosomal subunit, where it forms part of the central protuberance. In the 70S ribosome it contacts protein S13 of the 30S subunit (bridge B1b), connecting the 2 subunits; this bridge is implicated in subunit movement. Contacts the P site tRNA; the 5S rRNA and some of its associated proteins might help stabilize positioning of ribosome-bound tRNAs. The polypeptide is Large ribosomal subunit protein uL5 (Nitrobacter winogradskyi (strain ATCC 25391 / DSM 10237 / CIP 104748 / NCIMB 11846 / Nb-255)).